A 38-amino-acid chain; its full sequence is Photosystem II reaction center protein L (38 aa).

Residues Ser-17–Phe-37 traverse the membrane as a helical segment.

It belongs to the PsbL family. In terms of assembly, PSII is composed of 1 copy each of membrane proteins PsbA, PsbB, PsbC, PsbD, PsbE, PsbF, PsbH, PsbI, PsbJ, PsbK, PsbL, PsbM, PsbT, PsbX, PsbY, PsbZ, Psb30/Ycf12, peripheral proteins PsbO, CyanoQ (PsbQ), PsbU, PsbV and a large number of cofactors. It forms dimeric complexes.

It is found in the cellular thylakoid membrane. In terms of biological role, one of the components of the core complex of photosystem II (PSII). PSII is a light-driven water:plastoquinone oxidoreductase that uses light energy to abstract electrons from H(2)O, generating O(2) and a proton gradient subsequently used for ATP formation. It consists of a core antenna complex that captures photons, and an electron transfer chain that converts photonic excitation into a charge separation. This subunit is found at the monomer-monomer interface and is required for correct PSII assembly and/or dimerization. This chain is Photosystem II reaction center protein L, found in Acaryochloris marina (strain MBIC 11017).